Here is a 342-residue protein sequence, read N- to C-terminus: Succinylglutamate desuccinylase (342 aa).

His63, Glu66, and His155 together coordinate Zn(2+). Residue Glu219 is part of the active site.

Belongs to the AspA/AstE family. Succinylglutamate desuccinylase subfamily. Zn(2+) is required as a cofactor.

The enzyme catalyses N-succinyl-L-glutamate + H2O = L-glutamate + succinate. Its pathway is amino-acid degradation; L-arginine degradation via AST pathway; L-glutamate and succinate from L-arginine: step 5/5. Its function is as follows. Transforms N(2)-succinylglutamate into succinate and glutamate. The polypeptide is Succinylglutamate desuccinylase (Vibrio parahaemolyticus serotype O3:K6 (strain RIMD 2210633)).